Reading from the N-terminus, the 361-residue chain is Histidinol-phosphate aminotransferase (361 aa).

Lys-216 is subject to N6-(pyridoxal phosphate)lysine.

The protein belongs to the class-II pyridoxal-phosphate-dependent aminotransferase family. Histidinol-phosphate aminotransferase subfamily. In terms of assembly, homodimer. Requires pyridoxal 5'-phosphate as cofactor.

The catalysed reaction is L-histidinol phosphate + 2-oxoglutarate = 3-(imidazol-4-yl)-2-oxopropyl phosphate + L-glutamate. It participates in amino-acid biosynthesis; L-histidine biosynthesis; L-histidine from 5-phospho-alpha-D-ribose 1-diphosphate: step 7/9. This chain is Histidinol-phosphate aminotransferase, found in Francisella philomiragia subsp. philomiragia (strain ATCC 25017 / CCUG 19701 / FSC 153 / O#319-036).